A 319-amino-acid polypeptide reads, in one-letter code: Coproporphyrin III ferrochelatase 2 (319 aa).

Fe-coproporphyrin III is bound by residues Tyr-13, Arg-30, 46–47 (RY), Ser-54, and Tyr-125. His-181 and Glu-262 together coordinate Fe(2+).

The protein belongs to the ferrochelatase family.

The protein localises to the cytoplasm. The catalysed reaction is Fe-coproporphyrin III + 2 H(+) = coproporphyrin III + Fe(2+). It functions in the pathway porphyrin-containing compound metabolism; protoheme biosynthesis. Involved in coproporphyrin-dependent heme b biosynthesis. Catalyzes the insertion of ferrous iron into coproporphyrin III to form Fe-coproporphyrin III. This is Coproporphyrin III ferrochelatase 2 from Bacillus anthracis.